The primary structure comprises 288 residues: Oxaloacetate decarboxylase (288 aa).

Residue Ser-47 coordinates substrate. Asp-85 contributes to the Mg(2+) binding site. Substrate is bound by residues Arg-156 and His-232.

Belongs to the isocitrate lyase/PEP mutase superfamily. Oxaloacetate decarboxylase family. In terms of assembly, homotetramer; dimer of dimers. The cofactor is Mg(2+).

The catalysed reaction is oxaloacetate + H(+) = pyruvate + CO2. Its function is as follows. Catalyzes the decarboxylation of oxaloacetate into pyruvate. Seems to play a role in maintaining cellular concentrations of bicarbonate and pyruvate. This chain is Oxaloacetate decarboxylase, found in Rhodopseudomonas palustris (strain TIE-1).